The primary structure comprises 221 residues: Octanoyltransferase (221 aa).

The 180-residue stretch at 29 to 208 folds into the BPL/LPL catalytic domain; sequence DEIPDTCLLL…RLTEFLLPAR (180 aa). Residues 67 to 74, 138 to 140, and 151 to 153 each bind substrate; these read RGGRITWH, AIG, and GFA. The Acyl-thioester intermediate role is filled by Cys169.

This sequence belongs to the LipB family.

The protein localises to the cytoplasm. The enzyme catalyses octanoyl-[ACP] + L-lysyl-[protein] = N(6)-octanoyl-L-lysyl-[protein] + holo-[ACP] + H(+). The protein operates within protein modification; protein lipoylation via endogenous pathway; protein N(6)-(lipoyl)lysine from octanoyl-[acyl-carrier-protein]: step 1/2. Its function is as follows. Catalyzes the transfer of endogenously produced octanoic acid from octanoyl-acyl-carrier-protein onto the lipoyl domains of lipoate-dependent enzymes. Lipoyl-ACP can also act as a substrate although octanoyl-ACP is likely to be the physiological substrate. In Acidothermus cellulolyticus (strain ATCC 43068 / DSM 8971 / 11B), this protein is Octanoyltransferase.